Here is a 250-residue protein sequence, read N- to C-terminus: tRNA (guanine-N(1)-)-methyltransferase (250 aa).

S-adenosyl-L-methionine contacts are provided by residues Gly115 and 135–140; that span reads LGDFVL.

It belongs to the RNA methyltransferase TrmD family. In terms of assembly, homodimer.

The protein resides in the cytoplasm. It carries out the reaction guanosine(37) in tRNA + S-adenosyl-L-methionine = N(1)-methylguanosine(37) in tRNA + S-adenosyl-L-homocysteine + H(+). Its function is as follows. Specifically methylates guanosine-37 in various tRNAs. This is tRNA (guanine-N(1)-)-methyltransferase from Legionella pneumophila (strain Lens).